We begin with the raw amino-acid sequence, 66 residues long: Large ribosomal subunit protein bL33c (66 aa).

Belongs to the bacterial ribosomal protein bL33 family.

The protein localises to the plastid. It localises to the chloroplast. The sequence is that of Large ribosomal subunit protein bL33c from Liriodendron tulipifera (Tuliptree).